The primary structure comprises 292 residues: Pyridoxal 5'-phosphate synthase subunit PdxS (292 aa).

Asp22 is a binding site for D-ribose 5-phosphate. Lys79 serves as the catalytic Schiff-base intermediate with D-ribose 5-phosphate. Gly151 contacts D-ribose 5-phosphate. Residue Arg163 coordinates D-glyceraldehyde 3-phosphate. D-ribose 5-phosphate is bound by residues Gly212 and 233–234; that span reads GS.

The protein belongs to the PdxS/SNZ family. In terms of assembly, in the presence of PdxT, forms a dodecamer of heterodimers.

It carries out the reaction aldehydo-D-ribose 5-phosphate + D-glyceraldehyde 3-phosphate + L-glutamine = pyridoxal 5'-phosphate + L-glutamate + phosphate + 3 H2O + H(+). Its pathway is cofactor biosynthesis; pyridoxal 5'-phosphate biosynthesis. Catalyzes the formation of pyridoxal 5'-phosphate from ribose 5-phosphate (RBP), glyceraldehyde 3-phosphate (G3P) and ammonia. The ammonia is provided by the PdxT subunit. Can also use ribulose 5-phosphate and dihydroxyacetone phosphate as substrates, resulting from enzyme-catalyzed isomerization of RBP and G3P, respectively. The protein is Pyridoxal 5'-phosphate synthase subunit PdxS of Thermoanaerobacter sp. (strain X514).